Consider the following 223-residue polypeptide: Killer cell lectin-like receptor subfamily B member 1B allele A (223 aa).

Over 1-45 the chain is Cytoplasmic; it reads MDTAVVYADLHLARTGEPKREPPPSLSPDTCQCPRWHRLALKLGC. The ITIM motif signature appears at 5 to 10; it reads VVYADL. Positions 31-34 match the LCK-binding motif motif; sequence CQCP. A helical; Signal-anchor for type II membrane protein membrane pass occupies residues 46 to 66; that stretch reads ACLILLVLSVIGLGVLVLTLL. The Extracellular segment spans residues 67 to 223; sequence QKPLIQNSPA…LKRESTCNDS (157 aa). The C-type lectin domain maps to 101 to 211; the sequence is HQDKCFHVSQ…CDSDNIWICQ (111 aa). Disulfide bonds link cysteine 122–cysteine 210 and cysteine 189–cysteine 202.

Homodimer; disulfide-linked. Interacts with tyrosine kinase LCK. Binds PTPN6/SHP-1 in a phosphorylation-dependent manner. In terms of tissue distribution, expressed in a subset of natural killer cells.

It localises to the membrane. Receptor for CLEC2D/OCIL. Ligand-binding contributes to inhibition of cytotoxic natural killer (NK) cells. May mediate MHC class I-independent 'missing-self' recognition of allografts, tumor cells and virus-infected cells. The chain is Killer cell lectin-like receptor subfamily B member 1B allele A from Rattus norvegicus (Rat).